Consider the following 715-residue polypeptide: Macrolide export ATP-binding/permease protein MacB (715 aa).

Residues 4–245 enclose the ABC transporter domain; the sequence is IELQDIRKTY…VSKAAPAQSK (242 aa). An ATP-binding site is contributed by 40-47; the sequence is GTSGSGKT. The tract at residues 229–251 is disordered; the sequence is AVGDMPQVSKAAPAQSKPVHSAM. Helical transmembrane passes span 277–297, 592–612, 639–659, and 681–701; these read AALT…MMEI, LLLA…MNIM, QFLF…ILVG, and ILAA…YPAW.

It belongs to the ABC transporter superfamily. Macrolide exporter (TC 3.A.1.122) family. As to quaternary structure, homodimer.

It is found in the cell inner membrane. Non-canonical ABC transporter that contains transmembrane domains (TMD), which form a pore in the inner membrane, and an ATP-binding domain (NBD), which is responsible for energy generation. Confers resistance against macrolides. This Syntrophobacter fumaroxidans (strain DSM 10017 / MPOB) protein is Macrolide export ATP-binding/permease protein MacB.